Consider the following 414-residue polypeptide: Acetate kinase (414 aa).

Asparagine 7 contacts Mg(2+). Lysine 14 provides a ligand contact to ATP. Arginine 99 contacts substrate. Aspartate 157 (proton donor/acceptor) is an active-site residue. ATP-binding positions include 217-221 (HLGNG) and 341-345 (GIGEN). A Mg(2+)-binding site is contributed by glutamate 395.

This sequence belongs to the acetokinase family. As to quaternary structure, homodimer. Requires Mg(2+) as cofactor. Mn(2+) serves as cofactor.

It localises to the cytoplasm. The enzyme catalyses acetate + ATP = acetyl phosphate + ADP. The protein operates within metabolic intermediate biosynthesis; acetyl-CoA biosynthesis; acetyl-CoA from acetate: step 1/2. Functionally, catalyzes the formation of acetyl phosphate from acetate and ATP. Can also catalyze the reverse reaction. In Solibacter usitatus (strain Ellin6076), this protein is Acetate kinase.